A 130-amino-acid polypeptide reads, in one-letter code: Small ribosomal subunit protein uS9 (130 aa).

The disordered stretch occupies residues 111 to 130; sequence VERKKPGLKKARKASQFSKR. The span at 116-130 shows a compositional bias: basic residues; sequence PGLKKARKASQFSKR.

This sequence belongs to the universal ribosomal protein uS9 family.

This Lactococcus lactis subsp. lactis (strain IL1403) (Streptococcus lactis) protein is Small ribosomal subunit protein uS9.